The following is a 343-amino-acid chain: MSQKGKGSCPRPQQVPRLLVKGGIEVLDVKSGPDSITTIEAYLQPRPGQKNGYSTVITVQAEGYQDAPHSTEVPCYSCARIPLPTINDDITCPTLLMWEAVSVKTEVVGVSSILNMHSGAFRAFNGYGGGFTICGPRIHFFSVGGEPLDLQACMQNSKTVYPAPLIGPGEGERRETAQVLDTGYKARLDKDGLYPIECWCPDPAKNENTRYYGNLTGGPETPPVLAFTNTTTTILLDENGVGPLCKGDGLFLSAADVAGTYVDQRGRQYWRGLPRYFSIQLRKRNVRNPYPVSGLLNSLFNDLMPRMTGQSMQGSDAQVEEVRVYEGMEGLAPEIDMPPKAPR.

This sequence belongs to the polyomaviruses coat protein VP1 family. As to quaternary structure, homomultimer; disulfide-linked. The virus capsid is composed of 72 icosahedral units, each one composed of five disulfide-linked copies of VP1. Interacts with minor capsid proteins VP2 and VP3.

It is found in the virion. The protein resides in the host nucleus. Its function is as follows. Forms an icosahedral capsid with a T=7 symmetry and a 46-48 nm diameter. The capsid is composed of 72 pentamers linked to each other by disulfide bonds and associated with VP2 or VP3 proteins. Interacts with sialic acids on the cell surface to provide virion attachment to target cell. Once attached, the virion is internalized by endocytosis and traffics to the endoplasmic reticulum. Inside the endoplasmic reticulum, the protein folding machinery isomerizes VP1 interpentamer disulfide bonds, thereby triggering initial uncoating. Next, the virion uses the endoplasmic reticulum-associated degradation machinery to probably translocate in the cytosol before reaching the nucleus. Nuclear entry of the viral DNA involves the selective exposure and importin recognition of VP2/Vp3 nuclear localization signal. In late phase of infection, neo-synthesized VP1 encapsulates replicated genomic DNA in the nucleus, and participates in rearranging nucleosomes around the viral DNA. The protein is Major capsid protein VP1 of Psittacidae (parrots).